A 503-amino-acid chain; its full sequence is Lactation elevated protein 1 homolog B (503 aa).

The disordered stretch occupies residues 108–155; it reads LQNQPTSELQDKVGSRETVNICRPDENVSNEKEDQQEESSKPHPPQGY. The segment covering 130 to 148 has biased composition (basic and acidic residues); the sequence is RPDENVSNEKEDQQEESSK. 159–166 lines the ATP pocket; that stretch reads GNVGTGKT.

It belongs to the AFG1 ATPase family.

The protein is Lactation elevated protein 1 homolog B (lace1b) of Danio rerio (Zebrafish).